The primary structure comprises 152 residues: Protein Smg homolog (152 aa).

The protein belongs to the Smg family.

This chain is Protein Smg homolog, found in Bordetella avium (strain 197N).